The sequence spans 69 residues: DNA-directed RNA polymerase subunit epsilon (69 aa).

This sequence belongs to the RNA polymerase subunit epsilon family. In terms of assembly, RNAP is composed of a core of 2 alpha, a beta and a beta' subunit. The core is associated with a delta subunit, and at least one of epsilon or omega. When a sigma factor is associated with the core the holoenzyme is formed, which can initiate transcription.

The enzyme catalyses RNA(n) + a ribonucleoside 5'-triphosphate = RNA(n+1) + diphosphate. Functionally, a non-essential component of RNA polymerase (RNAP). This chain is DNA-directed RNA polymerase subunit epsilon, found in Geobacillus sp. (strain WCH70).